A 105-amino-acid polypeptide reads, in one-letter code: U2-lycotoxin-Ls1c (105 aa).

Residues 1–17 form the signal peptide; sequence MIKYVLISALLVVAVYS. Residues 18–41 constitute a propeptide that is removed on maturation; that stretch reads FTIEDSEDALLEEAEDELDTEEER. 4 disulfide bridges follow: Cys-51–Cys-67, Cys-58–Cys-97, Cys-60–Cys-83, and Cys-69–Cys-81.

The protein belongs to the neurotoxin 04 (omega-agtx) family. 01 (type I omega-agtx) subfamily. Expressed by the venom gland.

The protein resides in the secreted. Insecticidal to house crickets. It induces an excitatory slow-onset impact that leads to irreversible spastic paralysis. It also modifies human voltage-gated potassium channel Kv1.5/KCNA5. Most likely, it binds to the voltage-sensing domain of the channel, suggesting it does not block the pore but prevents its opening at physiological membrane potentials. The recombinant peptide binds to the channel in an irreversible manner and slows down the hKv1.5 current activation kinetics. It is not toxic to mice, when intracranially injected (at 0.5 ug/g mouse). The polypeptide is U2-lycotoxin-Ls1c (Lycosa singoriensis (Wolf spider)).